The primary structure comprises 432 residues: Tyrosine-protein phosphatase non-receptor type 1 (432 aa).

Methionine 1 carries the post-translational modification N-acetylmethionine. A Tyrosine-protein phosphatase domain is found at 3-277 (MEKEFEEIDK…RFSYLAVIEG (275 aa)). Residue tyrosine 20 is modified to Phosphotyrosine. The residue at position 50 (serine 50) is a Phosphoserine; by CLK1, CLK2 and PKB/AKT1 or PKB/AKT2. Residue tyrosine 66 is modified to Phosphotyrosine; by EGFR. Substrate-binding positions include aspartate 181 and 215 to 221 (CSAGIGR). The Phosphocysteine intermediate role is filled by cysteine 215. At cysteine 215 the chain carries Cysteine persulfide. Cysteine 215 carries the S-nitrosocysteine; in reversibly inhibited form modification. Phosphoserine; by CLK1 and CLK2 occurs at positions 242 and 243. Glutamine 262 provides a ligand contact to substrate. 2 disordered regions span residues 297–322 (EDLDLPPEHVPPPPRPPKRTLEPHNG) and 335–399 (SEET…EEHK). Phosphoserine is present on residues serine 335, serine 362, and serine 364. Residues 354 to 364 (SSAMHSVSSMS) are compositionally biased toward low complexity. Phosphothreonine is present on threonine 367.

This sequence belongs to the protein-tyrosine phosphatase family. Non-receptor class 1 subfamily. Interacts with EPHA3 (phosphorylated); dephosphorylates EPHA3 and may regulate its trafficking and function. Interacts with MET. Interacts with NCK1. In terms of processing, ser-50 is the major site of phosphorylation as compared to Ser-242 and Ser-243. Activated by phosphorylation at Ser-50. Post-translationally, S-nitrosylation of Cys-215 inactivates the enzyme activity. Sulfhydration at Cys-215 following endoplasmic reticulum stress inactivates the enzyme activity, promoting EIF2AK3/PERK activity. In terms of tissue distribution, most abundant in testis. Also found in kidney, spleen, muscle, liver, heart and brain.

The protein resides in the endoplasmic reticulum membrane. It carries out the reaction O-phospho-L-tyrosyl-[protein] + H2O = L-tyrosyl-[protein] + phosphate. In terms of biological role, tyrosine-protein phosphatase which acts as a regulator of endoplasmic reticulum unfolded protein response. Mediates dephosphorylation of EIF2AK3/PERK; inactivating the protein kinase activity of EIF2AK3/PERK. May play an important role in CKII- and p60c-src-induced signal transduction cascades. May regulate the EFNA5-EPHA3 signaling pathway which modulates cell reorganization and cell-cell repulsion. May also regulate the hepatocyte growth factor receptor signaling pathway through dephosphorylation of MET. The protein is Tyrosine-protein phosphatase non-receptor type 1 (Ptpn1) of Mus musculus (Mouse).